A 107-amino-acid polypeptide reads, in one-letter code: MGITEKLDGVAVTTKANVYFDGKCVSHSVRFADGTGKSVGVILPSILTFNTGAPEVMEGVAGSCRVRLKGETTWNTYGAGESYQVPGNSSFDIEVVGEPYHYICHFG.

Belongs to the nucleoside phosphorylase PpnP family.

The catalysed reaction is a purine D-ribonucleoside + phosphate = a purine nucleobase + alpha-D-ribose 1-phosphate. The enzyme catalyses adenosine + phosphate = alpha-D-ribose 1-phosphate + adenine. It catalyses the reaction cytidine + phosphate = cytosine + alpha-D-ribose 1-phosphate. It carries out the reaction guanosine + phosphate = alpha-D-ribose 1-phosphate + guanine. The catalysed reaction is inosine + phosphate = alpha-D-ribose 1-phosphate + hypoxanthine. The enzyme catalyses thymidine + phosphate = 2-deoxy-alpha-D-ribose 1-phosphate + thymine. It catalyses the reaction uridine + phosphate = alpha-D-ribose 1-phosphate + uracil. It carries out the reaction xanthosine + phosphate = alpha-D-ribose 1-phosphate + xanthine. In terms of biological role, catalyzes the phosphorolysis of diverse nucleosides, yielding D-ribose 1-phosphate and the respective free bases. Can use uridine, adenosine, guanosine, cytidine, thymidine, inosine and xanthosine as substrates. Also catalyzes the reverse reactions. In Azoarcus sp. (strain BH72), this protein is Pyrimidine/purine nucleoside phosphorylase.